Reading from the N-terminus, the 300-residue chain is Diaminopimelate epimerase (300 aa).

Residues Asn15, Gln47, and Asn67 each coordinate substrate. Catalysis depends on Cys76, which acts as the Proton donor. Residues Gly77–Asn78, Asn163, Asn197, and Glu215–Arg216 contribute to the substrate site. Cys224 (proton acceptor) is an active-site residue. Residue Gly225–Ser226 coordinates substrate. Residues Ser275–Ala300 are disordered. Basic and acidic residues predominate over residues Trp285–Ala300.

It belongs to the diaminopimelate epimerase family. As to quaternary structure, homodimer.

Its subcellular location is the cytoplasm. It carries out the reaction (2S,6S)-2,6-diaminopimelate = meso-2,6-diaminopimelate. It functions in the pathway amino-acid biosynthesis; L-lysine biosynthesis via DAP pathway; DL-2,6-diaminopimelate from LL-2,6-diaminopimelate: step 1/1. Catalyzes the stereoinversion of LL-2,6-diaminopimelate (L,L-DAP) to meso-diaminopimelate (meso-DAP), a precursor of L-lysine and an essential component of the bacterial peptidoglycan. The polypeptide is Diaminopimelate epimerase (Brucella anthropi (strain ATCC 49188 / DSM 6882 / CCUG 24695 / JCM 21032 / LMG 3331 / NBRC 15819 / NCTC 12168 / Alc 37) (Ochrobactrum anthropi)).